The primary structure comprises 627 residues: (+)-3-carene synthase 1, chloroplastic (627 aa).

The N-terminal 36 residues, 1 to 36, are a transit peptide targeting the chloroplast; it reads MSVISIVPLASKPCLYKSFISSTHEPKALRRPISTV. Mg(2+) contacts are provided by Asp378, Asp382, and Asp530. A DDXXD motif motif is present at residues 378 to 382; sequence DDMYD.

This sequence belongs to the terpene synthase family. Tpsd subfamily. Mg(2+) serves as cofactor. It depends on Mn(2+) as a cofactor.

It is found in the plastid. The protein resides in the chloroplast. The catalysed reaction is (2E)-geranyl diphosphate = (+)-car-3-ene + diphosphate. It functions in the pathway terpene metabolism; oleoresin biosynthesis. In terms of biological role, terpene synthase (TPS) involved in the biosynthesis of monoterpene natural products included in conifer oleoresin secretions and volatile emissions; these compounds contribute to biotic and abiotic stress defense against herbivores (e.g. insect attack by white pine weevil P.strobi) and pathogens. Catalyzes the conversion of (2E)-geranyl diphosphate (GPP) to (+)-car-3-ene. The chain is (+)-3-carene synthase 1, chloroplastic from Picea sitchensis (Sitka spruce).